The chain runs to 597 residues: Tubulin polyglutamylase ttll-4 (597 aa).

Over residues 1–18 (MSSGYSSAPSVSHTSSEA) the composition is skewed to polar residues. Disordered stretches follow at residues 1-39 (MSSG…DEQR) and 80-107 (SKSK…FLKS). Acidic residues predominate over residues 26 to 35 (YEDGVDEEAS). In terms of domain architecture, TTL spans 134 to 472 (QSRLTWCHNS…HVPPSFDKLH (339 aa)). Residues Lys250, 256 to 257 (RG), 278 to 281 (QHYI), and 291 to 293 (KFD) each bind ATP. Residue Arg256 coordinates a protein. Arg317 provides a ligand contact to L-glutamate. Residue 338 to 339 (TN) coordinates ATP. Tyr340, Ser341, and Lys358 together coordinate L-glutamate. Positions 418, 431, and 433 each coordinate Mg(2+). Residue Lys449 participates in L-glutamate binding.

This sequence belongs to the tubulin--tyrosine ligase family. Requires Mg(2+) as cofactor.

It carries out the reaction L-glutamyl-[protein] + L-glutamate + ATP = gamma-L-glutamyl-L-glutamyl-[protein] + ADP + phosphate + H(+). Its function is as follows. Monoglutamylase which modifies tubulin, adding a single glutamate on the gamma-carboxyl group of specific glutamate residues of target proteins. Involved in the side-chain initiation step of the polyglutamylation reaction but not in the elongation step. Preferentially modifies beta-tail tubulin over the alpha-tubulin. Involved in side-chain glutamylation of tubulin in sensory cilia. Together with ttll-5 and ttll-11, required for male mating. The sequence is that of Tubulin polyglutamylase ttll-4 (ttll-4) from Caenorhabditis briggsae.